The primary structure comprises 153 residues: ATP synthase subunit a (153 aa).

2 helical membrane-spanning segments follow: residues 43-63 (AFHLDTLGWSVALGLIFLLIF) and 104-124 (IAPLALTIFVWVFLMNAVDLI).

Belongs to the ATPase A chain family. As to quaternary structure, F-type ATPases have 2 components, CF(1) - the catalytic core - and CF(0) - the membrane proton channel. CF(1) has five subunits: alpha(3), beta(3), gamma(1), delta(1), epsilon(1). CF(0) has three main subunits: a(1), b(2) and c(9-12). The alpha and beta chains form an alternating ring which encloses part of the gamma chain. CF(1) is attached to CF(0) by a central stalk formed by the gamma and epsilon chains, while a peripheral stalk is formed by the delta and b chains.

Its subcellular location is the cell inner membrane. Its function is as follows. Key component of the proton channel; it plays a direct role in the translocation of protons across the membrane. This chain is ATP synthase subunit a (atpB), found in Pseudomonas putida (Arthrobacter siderocapsulatus).